The following is a 181-amino-acid chain: Large ribosomal subunit protein uL5c (181 aa).

It belongs to the universal ribosomal protein uL5 family. Part of the 50S ribosomal subunit; contacts the 5S rRNA.

It localises to the plastid. It is found in the chloroplast. Its function is as follows. Binds 5S rRNA, forms part of the central protuberance of the 50S subunit. The chain is Large ribosomal subunit protein uL5c (rpl5) from Porphyra purpurea (Red seaweed).